A 154-amino-acid polypeptide reads, in one-letter code: Protein ripply (154 aa).

Positions 38–41 (WRPW) match the WRPW motif motif. Disordered regions lie at residues 54 to 86 (IRER…FQHP) and 121 to 154 (EDPA…PILN). Positions 85 to 119 (HPVKLHWSKPVYDYMYQYGKQLLDAFPVQATICIV) are ripply homology domain. The span at 121 to 140 (EDPAQSDDSDFESDYEDDSD) shows a compositional bias: acidic residues.

Belongs to the ripply family. In terms of tissue distribution, in the late gastrula stage, expression appears in the dorsal presomitic mesoderm and in the first three pairs of nascent somites. Expressed strongly in forming somites and then expression is rapidly down-regulated except in the first somite pair where expression is maintained for a longer period. Also expressed in the presumptive notochord and in the tail bud at the 48 hour larval stage. Expression disappears by the 72 hour stage.

It is found in the nucleus. May play a role in somitogenesis. This chain is Protein ripply, found in Branchiostoma belcheri (Amphioxus).